A 191-amino-acid chain; its full sequence is Protein RER1 homolog (191 aa).

A run of 3 helical transmembrane segments spans residues 35–55, 57–77, and 135–155; these read AFRWVIALISLVFFASRIILL, GFYIVAYAVGIYYLNLFLLFL, and FFDVPVFWPILVMYFFILTFL.

The protein belongs to the RER1 family.

Its subcellular location is the membrane. Its function is as follows. May be involved in protein transport along the secretory pathway. The chain is Protein RER1 homolog (rer-1) from Caenorhabditis elegans.